A 247-amino-acid chain; its full sequence is Small ribosomal subunit protein uS2 (247 aa).

The protein belongs to the universal ribosomal protein uS2 family.

The sequence is that of Small ribosomal subunit protein uS2 from Cupriavidus taiwanensis (strain DSM 17343 / BCRC 17206 / CCUG 44338 / CIP 107171 / LMG 19424 / R1) (Ralstonia taiwanensis (strain LMG 19424)).